We begin with the raw amino-acid sequence, 91 residues long: Essential MCU regulator, mitochondrial (91 aa).

The chain crosses the membrane as a helical span at residues 45–65; that stretch reads VIPFGLLGVVLTVIPGLLIGA.

Belongs to the SMDT1/EMRE family.

Its subcellular location is the mitochondrion inner membrane. In terms of biological role, essential regulatory subunit of the mitochondrial calcium uniporter (mcu) channel, a protein that mediates calcium uptake into mitochondria. In Aedes aegypti (Yellowfever mosquito), this protein is Essential MCU regulator, mitochondrial.